The primary structure comprises 120 residues: Large ribosomal subunit protein eL8 (120 aa).

It belongs to the eukaryotic ribosomal protein eL8 family. In terms of assembly, part of the 50S ribosomal subunit. Probably part of the RNase P complex.

It localises to the cytoplasm. Its function is as follows. Multifunctional RNA-binding protein that recognizes the K-turn motif in ribosomal RNA, the RNA component of RNase P, box H/ACA, box C/D and box C'/D' sRNAs. This is Large ribosomal subunit protein eL8 from Haloquadratum walsbyi (strain DSM 16790 / HBSQ001).